Here is a 360-residue protein sequence, read N- to C-terminus: G-protein coupled receptor 15 (360 aa).

At Met-1–Ser-33 the chain is on the extracellular side. Residues Val-34–Leu-54 form a helical membrane-spanning segment. At Met-55–Asp-69 the chain is on the cytoplasmic side. The helical transmembrane segment at Ile-70 to Met-90 threads the bilayer. The Extracellular portion of the chain corresponds to Asp-91–Ser-120. The chain crosses the membrane as a helical span at residues Val-121–Ala-141. The Cytoplasmic segment spans residues Lys-142–Ser-149. Residues Ala-150–Leu-170 form a helical membrane-spanning segment. Residues Ser-171–Lys-192 are Extracellular-facing. The chain crosses the membrane as a helical span at residues Leu-193–Thr-213. Residues Cys-214 to Ser-239 lie on the Cytoplasmic side of the membrane. The helical transmembrane segment at Ile-240–Phe-260 threads the bilayer. The Extracellular segment spans residues Lys-261–Met-284. A helical membrane pass occupies residues Asn-285–Phe-305. Residues Asp-306–Leu-360 lie on the Cytoplasmic side of the membrane. Ser-359 is subject to Phosphoserine.

This sequence belongs to the G-protein coupled receptor 1 family. As to quaternary structure, interacts with adapter YWHAE; this interaction promotes ER-to-Golgi transport of GPR15. In terms of processing, phosphorylation is necessary for YWHAE binding and efficient surface expression. Post-translationally, O-glycosylated. Sialylated O-glycans in the N-terminal tail inhibits binding of GPR15LG. Sulfation is required for efficient binding of GPR15LG. Highly expressed in gut tissues and lymphoid organs, largely restricted to TCRbeta+ cells. Expressed in fetal thymic dendritic epidermal T-cell precursors.

It localises to the cell membrane. In terms of biological role, g protein-coupled receptor that plays an important role in immune homeostasis. Acts via its natural ligand GPR15LG, a chemokine-like polypeptide strongly expressed in gastrointestinal tissues. GPR15-GPR15LG signaling axis regulates intestinal homeostasis and inflammation through the migration of immune cells. Controls thereby the specific homing of T-cells, particularly FOXP3+ regulatory T-cells (Tregs), to the large intestine lamina propria. Also required for skin localization of thymus-derived dendritic epidermal T-cells. Plays an important role in mediating cytoprotective function as well as angiogenesis of thrombomodulin. Mechanistically, preferentially signals through the Gi/o pathway to inhibit adenylate cyclase activity and activate a phosphatidylinositol-calcium second messenger system that regulates the release of Ca(2+) ions from intracellular stores. The chain is G-protein coupled receptor 15 (Gpr15) from Mus musculus (Mouse).